The sequence spans 680 residues: Probable galacturonosyltransferase 3 (680 aa).

At 1-6 the chain is on the cytoplasmic side; the sequence is MTTFST. A helical; Signal-anchor for type II membrane protein transmembrane segment spans residues 7-27; the sequence is CAAFLSLVVVLHAVHVGGAIL. At 28–680 the chain is on the lumenal side; it reads ESQAPHRELK…PYLRRCDINE (653 aa). The segment at 118–146 is disordered; it reads SFQNDTGMEDNASHSTTNQTDESENQFPN. Residues Asn-121, Asn-128, Asn-135, Asn-239, Asn-386, Asn-438, Asn-545, Asn-578, Asn-610, and Asn-631 are each glycosylated (N-linked (GlcNAc...) asparagine). Residues 130–145 are compositionally biased toward polar residues; it reads SHSTTNQTDESENQFP.

This sequence belongs to the glycosyltransferase 8 family. As to expression, expressed in roots, inflorescences, siliques, leaves and stems.

It is found in the golgi apparatus membrane. It functions in the pathway glycan metabolism; pectin biosynthesis. Functionally, may be involved in pectin and/or xylans biosynthesis in cell walls. The sequence is that of Probable galacturonosyltransferase 3 (GAUT3) from Arabidopsis thaliana (Mouse-ear cress).